A 220-amino-acid polypeptide reads, in one-letter code: Ribonuclease HII (220 aa).

Residues 32-220 (KHIAGIDEAG…FAPIKGCFDC (189 aa)) form the RNase H type-2 domain. Residues Asp-38, Glu-39, and Asp-130 each contribute to the a divalent metal cation site.

It belongs to the RNase HII family. The cofactor is Mn(2+). It depends on Mg(2+) as a cofactor.

It localises to the cytoplasm. The enzyme catalyses Endonucleolytic cleavage to 5'-phosphomonoester.. Functionally, endonuclease that specifically degrades the RNA of RNA-DNA hybrids. The protein is Ribonuclease HII of Brucella abortus (strain 2308).